The primary structure comprises 564 residues: MFS-type transporter astH (564 aa).

N23 carries an N-linked (GlcNAc...) asparagine glycan. The interval 26–59 is disordered; sequence KDTLVNCSPDPENPEKGQASSPRTQISVDDNEES. The span at 43–53 shows a compositional bias: polar residues; that stretch reads QASSPRTQISV. 4 consecutive transmembrane segments (helical) span residues 69-89, 106-126, 143-163, and 197-217; these read LAMIMISLCLAVFCLALDTTI, DVGWYGSAYLLTTSALTLSFG, GMFEIGSLICGATPNSLGLII, and GILGGLFGVASVVGPLIGGAF. An N-linked (GlcNAc...) asparagine glycan is attached at N220. The next 6 helical transmembrane spans lie at 225–245, 266–286, 297–317, 339–359, 375–395, and 396–416; these read WCFYINLPLGAVTGLFLILFF, LLGSLCFLPAIICVLLALQWG, IIALFTVFGVLLLAFAGVQWW, LFSFCLNASFIIFTYYLPMWF, LPMVLAVVIFSIISGGLVGAL, and GYYTPFMVIAPLIAAIGAGLL. The N-linked (GlcNAc...) asparagine glycan is linked to N425. 2 helical membrane passes run 461-481 and 537-557; these read TGTVIVMFMQTIGGAIFMSVG and FYVAVAMAVLALPGALVMQWI.

This sequence belongs to the major facilitator superfamily. TCR/Tet family.

The protein localises to the membrane. MFS-type transporter; part of the gene cluster that mediates the biosynthesis of astellolides, drimane-type sesquiterpene esters that show antimicrobial, anti-inflammatory, and anti-tumor activities. Seems not to be involved in astellolides translocation. This chain is MFS-type transporter astH, found in Aspergillus oryzae (strain ATCC 42149 / RIB 40) (Yellow koji mold).